A 337-amino-acid polypeptide reads, in one-letter code: HTH-type transcriptional regulator DegA (337 aa).

One can recognise an HTH lacI-type domain in the interval 1 to 57 (MKTTIYDVAKAAGVSITTVSRVINNTGRISDKTRQKVMNVMNEMAYTPNVHAAALTG). The segment at residues 5-24 (IYDVAKAAGVSITTVSRVIN) is a DNA-binding region (H-T-H motif). Residues 300-319 (AERHRTAGRSNRGKRKAKQK) form a disordered region.

In terms of biological role, involved in the control of degradation of B.subtilis amidophosphoribosyltransferase (purF). Probably activates the gene for a degradative protease. The polypeptide is HTH-type transcriptional regulator DegA (degA) (Bacillus subtilis (strain 168)).